A 378-amino-acid chain; its full sequence is Anhydro-N-acetylmuramic acid kinase (378 aa).

Glycine 9 to aspartate 16 contributes to the ATP binding site.

Belongs to the anhydro-N-acetylmuramic acid kinase family.

It catalyses the reaction 1,6-anhydro-N-acetyl-beta-muramate + ATP + H2O = N-acetyl-D-muramate 6-phosphate + ADP + H(+). Its pathway is amino-sugar metabolism; 1,6-anhydro-N-acetylmuramate degradation. It participates in cell wall biogenesis; peptidoglycan recycling. Catalyzes the specific phosphorylation of 1,6-anhydro-N-acetylmuramic acid (anhMurNAc) with the simultaneous cleavage of the 1,6-anhydro ring, generating MurNAc-6-P. Is required for the utilization of anhMurNAc either imported from the medium or derived from its own cell wall murein, and thus plays a role in cell wall recycling. The sequence is that of Anhydro-N-acetylmuramic acid kinase from Synechococcus sp. (strain ATCC 27144 / PCC 6301 / SAUG 1402/1) (Anacystis nidulans).